The following is a 353-amino-acid chain: Fasciclin-like arabinogalactan protein 21 (353 aa).

The N-terminal stretch at 1-28 (MGCCSSDCFVYFILSIALAFMAISTTLR) is a signal peptide. 6 N-linked (GlcNAc...) asparagine glycosylation sites follow: asparagine 51, asparagine 81, asparagine 94, asparagine 200, asparagine 249, and asparagine 315. The FAS1 1 domain occupies 83–181 (TLFAIEDASF…HGVIGPFSPL (99 aa)). The FAS1 2 domain occupies 254–352 (TILATPNLVS…GISHTLEIPH (99 aa)).

Belongs to the fasciclin-like AGP family.

It localises to the secreted. Functionally, may be a cell surface adhesion protein. This Arabidopsis thaliana (Mouse-ear cress) protein is Fasciclin-like arabinogalactan protein 21 (FLA21).